A 336-amino-acid polypeptide reads, in one-letter code: Methionine import ATP-binding protein MetN (336 aa).

One can recognise an ABC transporter domain in the interval Ile-2 to Gly-254. Residue Gly-34–Ser-41 coordinates ATP.

The protein belongs to the ABC transporter superfamily. Methionine importer (TC 3.A.1.24) family. The complex is composed of two ATP-binding proteins (MetN), two transmembrane proteins (MetI) and a solute-binding protein (MetQ).

It localises to the cell inner membrane. The enzyme catalyses L-methionine(out) + ATP + H2O = L-methionine(in) + ADP + phosphate + H(+). It carries out the reaction D-methionine(out) + ATP + H2O = D-methionine(in) + ADP + phosphate + H(+). Functionally, part of the ABC transporter complex MetNIQ involved in methionine import. Responsible for energy coupling to the transport system. This chain is Methionine import ATP-binding protein MetN, found in Campylobacter jejuni subsp. jejuni serotype O:2 (strain ATCC 700819 / NCTC 11168).